Here is a 442-residue protein sequence, read N- to C-terminus: Magnesium transporter MRS2-1 (442 aa).

The interval 1-30 (MSELKERLLPPRPASAMNLRDASVTRPSAS) is disordered. The next 2 membrane-spanning stretches (helical) occupy residues 378 to 398 (LLLTTATFVVAIFGVVAGIFG) and 414 to 434 (WVLIITGVCGFVIFSAFVWFF). A Required for magnesium transport activity motif is present at residues 398–400 (GMN).

It belongs to the CorA metal ion transporter (MIT) (TC 1.A.35.5) family. As to expression, expressed in the whole plant except stems.

The protein resides in the membrane. Magnesium transporter that may mediate the influx of magnesium. The protein is Magnesium transporter MRS2-1 (MRS2-1) of Arabidopsis thaliana (Mouse-ear cress).